Here is a 548-residue protein sequence, read N- to C-terminus: Glucose-6-phosphate isomerase (548 aa).

The Proton donor role is filled by Glu355. Active-site residues include His386 and Lys514.

It belongs to the GPI family.

It is found in the cytoplasm. It catalyses the reaction alpha-D-glucose 6-phosphate = beta-D-fructose 6-phosphate. The protein operates within carbohydrate biosynthesis; gluconeogenesis. It functions in the pathway carbohydrate degradation; glycolysis; D-glyceraldehyde 3-phosphate and glycerone phosphate from D-glucose: step 2/4. Catalyzes the reversible isomerization of glucose-6-phosphate to fructose-6-phosphate. In Yersinia enterocolitica serotype O:8 / biotype 1B (strain NCTC 13174 / 8081), this protein is Glucose-6-phosphate isomerase.